The following is a 662-amino-acid chain: Probable quinol oxidase subunit 1 (662 aa).

Helical transmembrane passes span 14–34 (WMIT…IAVI) and 58–78 (IMYL…ALLI). His102 serves as a coordination point for Fe(II)-heme a. A run of 8 helical transmembrane segments spans residues 103-123 (GVIM…NIVV), 140-160 (VSFW…IIGG), 187-207 (IAIQ…FVTI), 228-248 (FITT…LALM), 273-293 (FFWV…FGIY), 311-331 (MVWA…HHFF), 336-356 (GALI…PTGV), and 376-396 (MLFS…GVML). Residues His279, Tyr283, His328, and His329 each contribute to the Cu cation site. Residues 279-283 (HPEVY) constitute a cross-link (1'-histidyl-3'-tyrosine (His-Tyr)). His414 contributes to the heme a3 binding site. 5 helical membrane passes run 415-435 (FHYT…IFWY), 451-471 (CFWF…ILGL), 493-513 (ISTI…VSIV), 587-604 (PVGF…FFLI), and 608-627 (VIPA…YRSF). His416 contacts Fe(II)-heme a.

This sequence belongs to the heme-copper respiratory oxidase family. The cofactor is Cu cation. Ferriheme a is required as a cofactor. Requires Heme A3. as cofactor.

The protein localises to the cell membrane. The catalysed reaction is 2 a quinol + O2 = 2 a quinone + 2 H2O. Its pathway is energy metabolism; oxidative phosphorylation. Functionally, catalyzes quinol oxidation with the concomitant reduction of oxygen to water. This chain is Probable quinol oxidase subunit 1 (qoxB), found in Staphylococcus aureus (strain MRSA252).